An 87-amino-acid chain; its full sequence is uncharacterized protein (87 aa).

A disordered region spans residues T67–G87.

This is an uncharacterized protein from Mycobacterium bovis (strain ATCC BAA-935 / AF2122/97).